Reading from the N-terminus, the 266-residue chain is Glucosamine-6-phosphate deaminase (266 aa).

Asp-72 functions as the Proton acceptor; for enolization step in the catalytic mechanism. The For ring-opening step role is filled by Asp-141. His-143 functions as the Proton acceptor; for ring-opening step in the catalytic mechanism. The For ring-opening step role is filled by Glu-148.

This sequence belongs to the glucosamine/galactosamine-6-phosphate isomerase family. NagB subfamily. In terms of assembly, homohexamer.

It catalyses the reaction alpha-D-glucosamine 6-phosphate + H2O = beta-D-fructose 6-phosphate + NH4(+). Its pathway is amino-sugar metabolism; N-acetylneuraminate degradation; D-fructose 6-phosphate from N-acetylneuraminate: step 5/5. With respect to regulation, allosterically activated by N-acetylglucosamine 6-phosphate (GlcNAc6P). Catalyzes the reversible isomerization-deamination of glucosamine 6-phosphate (GlcN6P) to form fructose 6-phosphate (Fru6P) and ammonium ion. This Enterobacter sp. (strain 638) protein is Glucosamine-6-phosphate deaminase.